The sequence spans 131 residues: Sperm microtubule inner protein 11 (131 aa).

Residues 17 to 44 form a disordered region; the sequence is SKKRDKTEETNQKDPVPTRLPPIFSEDG.

Microtubule inner protein component of sperm flagellar doublet microtubules. As to expression, expressed in sperm.

It localises to the cytoplasm. Its subcellular location is the cytoskeleton. The protein resides in the flagellum axoneme. In terms of biological role, microtubule inner protein (MIP) part of the dynein-decorated doublet microtubules (DMTs) in flagellum axoneme. May serve to reinforce and thus stabilize the microtubule structure in the sperm flagella. This chain is Sperm microtubule inner protein 11 (SPMIP11), found in Bos taurus (Bovine).